Here is a 463-residue protein sequence, read N- to C-terminus: ATP-dependent protease ATPase subunit HslU (463 aa).

ATP contacts are provided by residues Ile19, 61 to 66 (GVGKTE), Asp277, Glu341, and Arg413.

The protein belongs to the ClpX chaperone family. HslU subfamily. In terms of assembly, a double ring-shaped homohexamer of HslV is capped on each side by a ring-shaped HslU homohexamer. The assembly of the HslU/HslV complex is dependent on binding of ATP.

The protein resides in the cytoplasm. ATPase subunit of a proteasome-like degradation complex; this subunit has chaperone activity. The binding of ATP and its subsequent hydrolysis by HslU are essential for unfolding of protein substrates subsequently hydrolyzed by HslV. HslU recognizes the N-terminal part of its protein substrates and unfolds these before they are guided to HslV for hydrolysis. The chain is ATP-dependent protease ATPase subunit HslU from Bacillus cereus (strain ATCC 14579 / DSM 31 / CCUG 7414 / JCM 2152 / NBRC 15305 / NCIMB 9373 / NCTC 2599 / NRRL B-3711).